The sequence spans 416 residues: Serine hydroxymethyltransferase (416 aa).

(6S)-5,6,7,8-tetrahydrofolate-binding positions include L121 and 125–127 (GHL). An N6-(pyridoxal phosphate)lysine modification is found at K230. Residue 354–356 (SPF) participates in (6S)-5,6,7,8-tetrahydrofolate binding.

It belongs to the SHMT family. In terms of assembly, homodimer. Requires pyridoxal 5'-phosphate as cofactor.

It localises to the cytoplasm. It catalyses the reaction (6R)-5,10-methylene-5,6,7,8-tetrahydrofolate + glycine + H2O = (6S)-5,6,7,8-tetrahydrofolate + L-serine. It functions in the pathway one-carbon metabolism; tetrahydrofolate interconversion. It participates in amino-acid biosynthesis; glycine biosynthesis; glycine from L-serine: step 1/1. Its function is as follows. Catalyzes the reversible interconversion of serine and glycine with tetrahydrofolate (THF) serving as the one-carbon carrier. This reaction serves as the major source of one-carbon groups required for the biosynthesis of purines, thymidylate, methionine, and other important biomolecules. Also exhibits THF-independent aldolase activity toward beta-hydroxyamino acids, producing glycine and aldehydes, via a retro-aldol mechanism. The polypeptide is Serine hydroxymethyltransferase (Prochlorococcus marinus (strain MIT 9211)).